Here is a 137-residue protein sequence, read N- to C-terminus: Large ribosomal subunit protein mL41 (137 aa).

The N-terminal 13 residues, 1-13 (MGVLAAAARCLVR), are a transit peptide targeting the mitochondrion.

Belongs to the mitochondrion-specific ribosomal protein mL41 family. In terms of assembly, component of the mitochondrial large ribosomal subunit (mt-LSU). Mature mammalian 55S mitochondrial ribosomes consist of a small (28S) and a large (39S) subunit. The 28S small subunit contains a 12S ribosomal RNA (12S mt-rRNA) and 30 different proteins. The 39S large subunit contains a 16S rRNA (16S mt-rRNA), a copy of mitochondrial valine transfer RNA (mt-tRNA(Val)), which plays an integral structural role, and 52 different proteins. Interacts with BCL2. In terms of tissue distribution, present in kidney, liver, thymus and testis, and at lower level in brain and spleen (at protein level).

Its subcellular location is the mitochondrion. Component of the mitochondrial ribosome large subunit. Also involved in apoptosis and cell cycle. Enhances p53/TP53 stability, thereby contributing to p53/TP53-induced apoptosis in response to growth-inhibitory condition. Enhances p53/TP53 translocation to the mitochondria. Has the ability to arrest the cell cycle at the G1 phase, possibly by stabilizing the CDKN1A and CDKN1B (p27Kip1) proteins. This Homo sapiens (Human) protein is Large ribosomal subunit protein mL41 (MRPL41).